Reading from the N-terminus, the 613-residue chain is Ribosome-associated molecular chaperone SSB2 (613 aa).

Ala2 bears the N-acetylalanine mark. The tract at residues 2–391 is nucleotide binding domain (NBD); it reads AEGVFQGAIG…ILTGQSTSDE (390 aa). 16–18 lines the ATP pocket; the sequence is TTY. Thr47 is modified (phosphothreonine). Residues Lys73, 205–207, 271–278, and Gly342 each bind ATP; these read GGT and ERAKRTLS. The tract at residues 392 to 402 is inter-domain linker; it reads TKDLLLLDVAP. The tract at residues 403–613 is substrate binding domain (SBD); sequence LSLGVGMQGD…RVVTKAMSSR (211 aa). The short motif at 428–430 is the Contributes to ribosome binding element; that stretch reads KRR. Thr431 carries the phosphothreonine modification. Positions 516-612 are lid domain (SBDalpha); that stretch reads SEEIEKMVNQ…KRVVTKAMSS (97 aa). Residues 574 to 582 carry the Nuclear export signal motif; the sequence is IEAALSDAL. The required for interaction with ribosomes stretch occupies residues 601–613; the sequence is GLKRVVTKAMSSR.

This sequence belongs to the heat shock protein 70 family. Ssb-type Hsp70 subfamily. As to quaternary structure, binds to ribosomes. Binds close to the ribosomal tunnel exit via contacts with both ribosomal proteins RPL35, RPL39 and RPL19, and rRNA. Directly interacts with nascent polypeptides. This interaction is dependent on the ribosome-associated complex (RAC). Interacts with SSE1.

Its subcellular location is the cytoplasm. It catalyses the reaction ATP + H2O = ADP + phosphate + H(+). Its function is as follows. Ribosome-bound, Hsp70-type chaperone that assists in the cotranslational folding of newly synthesized proteins in the cytosol. Stimulates folding by interacting with nascent chains, binding to short, largely hydrophobic sequences exposed by unfolded proteins, thereby stabilizing longer, more slowly translated, and aggregation-prone nascent polypeptides and domains that cannot fold stably until fully synthesized. The Hsp70-protein substrate interaction depends on ATP-binding and on allosteric regulation between the NBD and the SBD. The ATP-bound state is characterized by a fast exchange rate of substrate (low affinity state), while in the ADP-bound state exchange is much slower (high affinity state). During the Hsp70 cycle, the chaperone switches between the ATP-bound state (open conformation) and the ADP-bound state (closed conformation) by major conformational rearrangements involving mainly the lid domain. Ssb cooperates with a specific Hsp40/Hsp70 co-chaperone termed the ribosome-associated complex (RAC), which stimulates the ATPase activity of the ribosome-associated pool of Ssbs and switches it to the high affinity substrate binding state. Hsp110 chaperone SSE1 and FES1 act as nucleotide exchange factors that cause substrate release. In Saccharomyces cerevisiae (strain ATCC 204508 / S288c) (Baker's yeast), this protein is Ribosome-associated molecular chaperone SSB2.